A 95-amino-acid chain; its full sequence is UPF0358 protein BA_4159/GBAA_4159/BAS3861 (95 aa).

It belongs to the UPF0358 family.

The protein is UPF0358 protein BA_4159/GBAA_4159/BAS3861 of Bacillus anthracis.